A 237-amino-acid chain; its full sequence is DNA repair protein RecO (237 aa).

This sequence belongs to the RecO family.

In terms of biological role, involved in DNA repair and RecF pathway recombination. The protein is DNA repair protein RecO of Rickettsia peacockii (strain Rustic).